A 175-amino-acid chain; its full sequence is Outer membrane protein assembly factor BamE (175 aa).

The first 21 residues, methionine 1–glycine 21, serve as a signal peptide directing secretion. Residue cysteine 22 is the site of N-palmitoyl cysteine attachment. Residue cysteine 22 is the site of S-diacylglycerol cysteine attachment. Disordered regions lie at residues alanine 117 to serine 147 and isoleucine 156 to glutamine 175.

The protein belongs to the BamE family. As to quaternary structure, part of the Bam complex.

It is found in the cell outer membrane. In terms of biological role, part of the outer membrane protein assembly complex, which is involved in assembly and insertion of beta-barrel proteins into the outer membrane. May have a structural role in maintaining the cell envelope integrity. This chain is Outer membrane protein assembly factor BamE, found in Pseudomonas fluorescens.